The sequence spans 282 residues: NADPH-dependent 7-cyano-7-deazaguanine reductase (282 aa).

88–90 is a substrate binding site; that stretch reads IES. 90–91 lines the NADPH pocket; that stretch reads SK. The active-site Thioimide intermediate is the cysteine 190. Aspartate 197 serves as the catalytic Proton donor. 229–230 contributes to the substrate binding site; sequence HE. An NADPH-binding site is contributed by 258 to 259; that stretch reads RG.

It belongs to the GTP cyclohydrolase I family. QueF type 2 subfamily. As to quaternary structure, homodimer.

The protein resides in the cytoplasm. The catalysed reaction is 7-aminomethyl-7-carbaguanine + 2 NADP(+) = 7-cyano-7-deazaguanine + 2 NADPH + 3 H(+). Its pathway is tRNA modification; tRNA-queuosine biosynthesis. Catalyzes the NADPH-dependent reduction of 7-cyano-7-deazaguanine (preQ0) to 7-aminomethyl-7-deazaguanine (preQ1). The sequence is that of NADPH-dependent 7-cyano-7-deazaguanine reductase from Escherichia coli O17:K52:H18 (strain UMN026 / ExPEC).